A 282-amino-acid chain; its full sequence is Light-independent protochlorophyllide reductase iron-sulfur ATP-binding protein (282 aa).

Residues 10-15 (GIGKST) and lysine 39 contribute to the ATP site. Serine 14 is a binding site for Mg(2+). The [4Fe-4S] cluster site is built by cysteine 95 and cysteine 129. Residue 180 to 181 (NR) coordinates ATP.

This sequence belongs to the NifH/BchL/ChlL family. As to quaternary structure, homodimer. Protochlorophyllide reductase is composed of three subunits; ChlL, ChlN and ChlB. Requires [4Fe-4S] cluster as cofactor.

It is found in the plastid. Its subcellular location is the cyanelle. It catalyses the reaction chlorophyllide a + oxidized 2[4Fe-4S]-[ferredoxin] + 2 ADP + 2 phosphate = protochlorophyllide a + reduced 2[4Fe-4S]-[ferredoxin] + 2 ATP + 2 H2O. Its pathway is porphyrin-containing compound metabolism; chlorophyll biosynthesis (light-independent). Functionally, component of the dark-operative protochlorophyllide reductase (DPOR) that uses Mg-ATP and reduced ferredoxin to reduce ring D of protochlorophyllide (Pchlide) to form chlorophyllide a (Chlide). This reaction is light-independent. The L component serves as a unique electron donor to the NB-component of the complex, and binds Mg-ATP. The chain is Light-independent protochlorophyllide reductase iron-sulfur ATP-binding protein from Cyanophora paradoxa.